Reading from the N-terminus, the 358-residue chain is 1-deoxy-D-xylulose 5-phosphate reductoisomerase (358 aa).

Residues threonine 7, glycine 8, serine 9, isoleucine 10, glycine 31, asparagine 33, and asparagine 114 each coordinate NADPH. Lysine 115 contacts 1-deoxy-D-xylulose 5-phosphate. NADPH is bound at residue glutamate 116. Residue aspartate 134 coordinates Mn(2+). 1-deoxy-D-xylulose 5-phosphate contacts are provided by serine 135, glutamate 136, serine 157, and histidine 180. Residue glutamate 136 coordinates Mn(2+). Glycine 186 is an NADPH binding site. 1-deoxy-D-xylulose 5-phosphate is bound by residues serine 193, asparagine 198, lysine 199, and glutamate 202. Glutamate 202 contributes to the Mn(2+) binding site.

Belongs to the DXR family. Mg(2+) serves as cofactor. Requires Mn(2+) as cofactor.

It catalyses the reaction 2-C-methyl-D-erythritol 4-phosphate + NADP(+) = 1-deoxy-D-xylulose 5-phosphate + NADPH + H(+). It functions in the pathway isoprenoid biosynthesis; isopentenyl diphosphate biosynthesis via DXP pathway; isopentenyl diphosphate from 1-deoxy-D-xylulose 5-phosphate: step 1/6. Catalyzes the NADPH-dependent rearrangement and reduction of 1-deoxy-D-xylulose-5-phosphate (DXP) to 2-C-methyl-D-erythritol 4-phosphate (MEP). This Wolinella succinogenes (strain ATCC 29543 / DSM 1740 / CCUG 13145 / JCM 31913 / LMG 7466 / NCTC 11488 / FDC 602W) (Vibrio succinogenes) protein is 1-deoxy-D-xylulose 5-phosphate reductoisomerase.